Consider the following 270-residue polypeptide: Phosphatidate cytidylyltransferase (270 aa).

A run of 8 helical transmembrane segments spans residues 17 to 37 (FVVLCFVSYESLIGLVSAILI), 55 to 75 (FFYVILLALYPVLYGLVFEEP), 81 to 101 (ILFITGVVFSLITDKDPSQVF), 104 to 124 (VAAFSIALIYVTFFLSFFLPI), 129 to 149 (GAANALLVLTSTWVFDSFAYF), 170 to 190 (EGVIGGFLGVVIYTFLYRLVV), 193 to 213 (LLSVNVISFRTFLPFAATVAI), and 248 to 268 (IDGLLFVAPVSYIVFKILEGV).

It belongs to the CDS family.

Its subcellular location is the cell membrane. The enzyme catalyses a 1,2-diacyl-sn-glycero-3-phosphate + CTP + H(+) = a CDP-1,2-diacyl-sn-glycerol + diphosphate. The protein operates within phospholipid metabolism; CDP-diacylglycerol biosynthesis; CDP-diacylglycerol from sn-glycerol 3-phosphate: step 3/3. The polypeptide is Phosphatidate cytidylyltransferase (cdsA) (Thermotoga maritima (strain ATCC 43589 / DSM 3109 / JCM 10099 / NBRC 100826 / MSB8)).